A 143-amino-acid polypeptide reads, in one-letter code: Peptide methionine sulfoxide reductase B8 (143 aa).

Residues 18-139 (DEEWRAVLSP…NSVSLKFASA (122 aa)) form the MsrB domain. 4 residues coordinate Zn(2+): Cys-57, Cys-60, Cys-103, and Cys-106. Cys-75 and Cys-128 are disulfide-bonded. Cys-128 acts as the Nucleophile in catalysis.

This sequence belongs to the MsrB Met sulfoxide reductase family. Zn(2+) is required as a cofactor.

Its subcellular location is the cytoplasm. It is found in the cytosol. It carries out the reaction L-methionyl-[protein] + [thioredoxin]-disulfide + H2O = L-methionyl-(R)-S-oxide-[protein] + [thioredoxin]-dithiol. In terms of biological role, catalyzes the reduction of methionine sulfoxide (MetSO) to methionine in proteins. Plays a protective role against oxidative stress by restoring activity to proteins that have been inactivated by methionine oxidation. MSRB family specifically reduces the MetSO R-enantiomer. This is Peptide methionine sulfoxide reductase B8 (MSRB8) from Arabidopsis thaliana (Mouse-ear cress).